The following is a 634-amino-acid chain: 1-deoxy-D-xylulose-5-phosphate synthase (634 aa).

Residues H77 and 118–120 each bind thiamine diphosphate; that span reads GHA. D149 lines the Mg(2+) pocket. Residues 150 to 151, N178, Y289, and E371 contribute to the thiamine diphosphate site; that span reads AS. Position 178 (N178) interacts with Mg(2+).

Belongs to the transketolase family. DXPS subfamily. Homodimer. Mg(2+) serves as cofactor. Thiamine diphosphate is required as a cofactor.

The catalysed reaction is D-glyceraldehyde 3-phosphate + pyruvate + H(+) = 1-deoxy-D-xylulose 5-phosphate + CO2. It participates in metabolic intermediate biosynthesis; 1-deoxy-D-xylulose 5-phosphate biosynthesis; 1-deoxy-D-xylulose 5-phosphate from D-glyceraldehyde 3-phosphate and pyruvate: step 1/1. Functionally, catalyzes the acyloin condensation reaction between C atoms 2 and 3 of pyruvate and glyceraldehyde 3-phosphate to yield 1-deoxy-D-xylulose-5-phosphate (DXP). The chain is 1-deoxy-D-xylulose-5-phosphate synthase from Leptospira interrogans serogroup Icterohaemorrhagiae serovar copenhageni (strain Fiocruz L1-130).